A 198-amino-acid polypeptide reads, in one-letter code: Ribonuclease HII (198 aa).

The region spanning 10-198 is the RNase H type-2 domain; the sequence is QLVAGVDEVG…PVKRALGLAS (189 aa). A divalent metal cation contacts are provided by Asp16, Glu17, and Asp108.

Belongs to the RNase HII family. Mn(2+) serves as cofactor. The cofactor is Mg(2+).

It localises to the cytoplasm. It carries out the reaction Endonucleolytic cleavage to 5'-phosphomonoester.. In terms of biological role, endonuclease that specifically degrades the RNA of RNA-DNA hybrids. This chain is Ribonuclease HII, found in Shigella sonnei (strain Ss046).